The primary structure comprises 121 residues: uncharacterized protein (121 aa).

A disordered region spans residues 101–121 (SIEPTATGSPETRDPDPSAYA). Over residues 111–121 (ETRDPDPSAYA) the composition is skewed to basic and acidic residues.

The protein localises to the mitochondrion. This is an uncharacterized protein from Arabidopsis thaliana (Mouse-ear cress).